Here is a 370-residue protein sequence, read N- to C-terminus: uncharacterized protein (370 aa).

An OBG-type G domain is found at 62–293 (ATVALVGFPS…LKERMWRALG (232 aa)). GTP contacts are provided by residues 68–75 (GFPSVGKS), 114–118 (DVPGL), and 243–246 (NKVD). Residues 293 to 368 (GLIRIYMDKP…EDEDVLRVVA (76 aa)) form the TGS domain.

Belongs to the TRAFAC class OBG-HflX-like GTPase superfamily. OBG GTPase family.

This is an uncharacterized protein from Halobacterium salinarum (strain ATCC 700922 / JCM 11081 / NRC-1) (Halobacterium halobium).